The primary structure comprises 180 residues: Ribosome-recycling factor (180 aa).

The interval 135–156 is disordered; the sequence is SDLKKDNDLSEDSRHRTEDDIQ.

Belongs to the RRF family.

It is found in the cytoplasm. Responsible for the release of ribosomes from messenger RNA at the termination of protein biosynthesis. May increase the efficiency of translation by recycling ribosomes from one round of translation to another. The chain is Ribosome-recycling factor from Oenococcus oeni (strain ATCC BAA-331 / PSU-1).